We begin with the raw amino-acid sequence, 385 residues long: cAMP-dependent protein kinase regulatory subunit (385 aa).

Residues 1–22 show a composition bias toward polar residues; it reads MSSTGFTSPFGNANPFGSSGRS. 2 disordered regions span residues 1 to 51 and 77 to 111; these read MSST…GVKN and DFPA…PVHP. The tract at residues 1-128 is dimerization and phosphorylation; that stretch reads MSSTGFTSPF…RLKKAISGNF (128 aa). Ser89 is modified (phosphoserine). 3',5'-cyclic AMP-binding positions include 129 to 260, Glu207, Arg216, 261 to 378, Glu328, and Arg337; these read LFNH…EEVP and ILKT…EAEE.

Belongs to the cAMP-dependent kinase regulatory chain family. In terms of assembly, tetramer, composed of 2 regulatory (R) and 2 catalytic (C) subunits. In the presence of cAMP it dissociates into 2 active monomeric C subunits and an R dimer.

This chain is cAMP-dependent protein kinase regulatory subunit (mcb), found in Neurospora crassa (strain ATCC 24698 / 74-OR23-1A / CBS 708.71 / DSM 1257 / FGSC 987).